The sequence spans 484 residues: Glycogen synthase (484 aa).

ADP-alpha-D-glucose is bound at residue Lys-15.

Belongs to the glycosyltransferase 1 family. Bacterial/plant glycogen synthase subfamily.

It carries out the reaction [(1-&gt;4)-alpha-D-glucosyl](n) + ADP-alpha-D-glucose = [(1-&gt;4)-alpha-D-glucosyl](n+1) + ADP + H(+). It functions in the pathway glycan biosynthesis; glycogen biosynthesis. Synthesizes alpha-1,4-glucan chains using ADP-glucose. The sequence is that of Glycogen synthase from Geotalea daltonii (strain DSM 22248 / JCM 15807 / FRC-32) (Geobacter daltonii).